The sequence spans 228 residues: Probable septum site-determining protein MinC (228 aa).

It belongs to the MinC family. In terms of assembly, interacts with MinD and FtsZ.

Functionally, cell division inhibitor that blocks the formation of polar Z ring septums. Rapidly oscillates between the poles of the cell to destabilize FtsZ filaments that have formed before they mature into polar Z rings. Prevents FtsZ polymerization. This is Probable septum site-determining protein MinC from Bacillus anthracis (strain A0248).